Consider the following 1534-residue polypeptide: Dicer-like protein 1 (1534 aa).

The disordered stretch occupies residues 36-70; sequence PSAEPGVEHDQISPGESDEEIEENISDQNNSSSQK. A compositionally biased stretch (acidic residues) spans 51–60; that stretch reads ESDEEIEENI. Residues 130–311 enclose the Helicase ATP-binding domain; sequence LFERAKAQNT…AAATRLETLL (182 aa). ATP is bound at residue 143–150; it reads LDTGSGKT. Residues 256 to 259 carry the DEAH box motif; that stretch reads DEAH. One can recognise a Helicase C-terminal domain in the interval 456 to 613; the sequence is ELSKHFSHAP…FCETLPEDRI (158 aa). Positions 648–738 constitute a Dicer dsRNA-binding fold domain; that stretch reads AIAILARYAS…KSIYHKRLPA (91 aa). A PAZ domain is found at 888-1016; that stretch reads KTVTFVQEND…ICAEPLKISA (129 aa). RNase III domains are found at residues 1054–1199 and 1250–1402; these read SDYA…LSGG and ALQV…VDSD. 3 residues coordinate Mg(2+): E1291, D1388, and E1391. The DRBM domain occupies 1436 to 1504; the sequence is TFLHNRLANE…SERALVVLDG (69 aa). C1448, H1475, C1516, and C1518 together coordinate Zn(2+).

It belongs to the helicase family. Dicer subfamily. The cofactor is Mg(2+). Mn(2+) is required as a cofactor.

Functionally, dicer-like endonuclease involved in cleaving double-stranded RNA in the RNA interference (RNAi) pathway. Produces 21 to 25 bp dsRNAs (siRNAs) which target the selective destruction of homologous RNAs leading to sequence-specific suppression of gene expression, called post-transcriptional gene silencing (PTGS). Part of a broad host defense response against viral infection and transposons. The protein is Dicer-like protein 1 (dcl1) of Aspergillus clavatus (strain ATCC 1007 / CBS 513.65 / DSM 816 / NCTC 3887 / NRRL 1 / QM 1276 / 107).